The sequence spans 443 residues: UPF0656 protein C926.02 (443 aa).

It belongs to the UPF0656 family.

It localises to the cytoplasm. The protein localises to the nucleus. This chain is UPF0656 protein C926.02, found in Schizosaccharomyces pombe (strain 972 / ATCC 24843) (Fission yeast).